A 21-amino-acid chain; its full sequence is 78 kDa dihydrolipoyllysine-residue acetyltransferase component of pyruvate dehydrogenase complex (21 aa).

The protein belongs to the 2-oxoacid dehydrogenase family. In terms of assembly, forms a 60-polypeptide structural core. Requires (R)-lipoate as cofactor.

The protein resides in the mitochondrion matrix. The catalysed reaction is N(6)-[(R)-dihydrolipoyl]-L-lysyl-[protein] + acetyl-CoA = N(6)-[(R)-S(8)-acetyldihydrolipoyl]-L-lysyl-[protein] + CoA. Functionally, the pyruvate dehydrogenase complex catalyzes the overall conversion of pyruvate to acetyl-CoA and CO(2). It contains multiple copies of three enzymatic components: pyruvate dehydrogenase (E1), dihydrolipoamide acetyltransferase (E2) and lipoamide dehydrogenase (E3). The chain is 78 kDa dihydrolipoyllysine-residue acetyltransferase component of pyruvate dehydrogenase complex from Solanum tuberosum (Potato).